Here is a 303-residue protein sequence, read N- to C-terminus: Sulfate adenylyltransferase subunit 2 (303 aa).

This sequence belongs to the PAPS reductase family. CysD subfamily. Heterodimer composed of CysD, the smaller subunit, and CysN.

It carries out the reaction sulfate + ATP + H(+) = adenosine 5'-phosphosulfate + diphosphate. It functions in the pathway sulfur metabolism; hydrogen sulfide biosynthesis; sulfite from sulfate: step 1/3. In terms of biological role, with CysN forms the ATP sulfurylase (ATPS) that catalyzes the adenylation of sulfate producing adenosine 5'-phosphosulfate (APS) and diphosphate, the first enzymatic step in sulfur assimilation pathway. APS synthesis involves the formation of a high-energy phosphoric-sulfuric acid anhydride bond driven by GTP hydrolysis by CysN coupled to ATP hydrolysis by CysD. The chain is Sulfate adenylyltransferase subunit 2 from Bacteroides fragilis (strain YCH46).